A 236-amino-acid chain; its full sequence is DNA repair protein RecO (236 aa).

The protein belongs to the RecO family.

In terms of biological role, involved in DNA repair and RecF pathway recombination. The protein is DNA repair protein RecO of Rickettsia typhi (strain ATCC VR-144 / Wilmington).